Consider the following 355-residue polypeptide: Homoserine O-succinyltransferase (355 aa).

The Acyl-thioester intermediate role is filled by Cys-146. Substrate contacts are provided by Lys-167 and Ser-196. His-239 (proton acceptor) is an active-site residue. The active site involves Glu-241. Residue Arg-253 coordinates substrate.

This sequence belongs to the MetA family.

Its subcellular location is the cytoplasm. The enzyme catalyses L-homoserine + succinyl-CoA = O-succinyl-L-homoserine + CoA. The protein operates within amino-acid biosynthesis; L-methionine biosynthesis via de novo pathway; O-succinyl-L-homoserine from L-homoserine: step 1/1. In terms of biological role, transfers a succinyl group from succinyl-CoA to L-homoserine, forming succinyl-L-homoserine. In Methylococcus capsulatus (strain ATCC 33009 / NCIMB 11132 / Bath), this protein is Homoserine O-succinyltransferase.